Here is an 835-residue protein sequence, read N- to C-terminus: Protein translocase subunit SecA (835 aa).

Residues Gln-85, Gly-103–Thr-107, and Asp-492 contribute to the ATP site. 4 residues coordinate Zn(2+): Cys-819, Cys-821, Cys-830, and Cys-831.

Belongs to the SecA family. Monomer and homodimer. Part of the essential Sec protein translocation apparatus which comprises SecA, SecYEG and auxiliary proteins SecDF. Other proteins may also be involved. Zn(2+) serves as cofactor.

Its subcellular location is the cell membrane. It localises to the cytoplasm. The enzyme catalyses ATP + H2O + cellular proteinSide 1 = ADP + phosphate + cellular proteinSide 2.. Part of the Sec protein translocase complex. Interacts with the SecYEG preprotein conducting channel. Has a central role in coupling the hydrolysis of ATP to the transfer of proteins into and across the cell membrane, serving as an ATP-driven molecular motor driving the stepwise translocation of polypeptide chains across the membrane. The sequence is that of Protein translocase subunit SecA from Clostridium botulinum (strain ATCC 19397 / Type A).